The chain runs to 104 residues: Large ribosomal subunit protein bL21 (104 aa).

Belongs to the bacterial ribosomal protein bL21 family. As to quaternary structure, part of the 50S ribosomal subunit. Contacts protein L20.

Functionally, this protein binds to 23S rRNA in the presence of protein L20. The polypeptide is Large ribosomal subunit protein bL21 (Helicobacter pylori (strain G27)).